The sequence spans 351 residues: UDP-N-acetylenolpyruvoylglucosamine reductase (351 aa).

One can recognise an FAD-binding PCMH-type domain in the interval 25–196 (HIQAQARWLL…TAVEFRLPLL (172 aa)). Residue Arg-173 is part of the active site. Residue Ser-246 is the Proton donor of the active site. The active site involves Glu-343.

This sequence belongs to the MurB family. It depends on FAD as a cofactor.

It is found in the cytoplasm. The enzyme catalyses UDP-N-acetyl-alpha-D-muramate + NADP(+) = UDP-N-acetyl-3-O-(1-carboxyvinyl)-alpha-D-glucosamine + NADPH + H(+). Its pathway is cell wall biogenesis; peptidoglycan biosynthesis. Cell wall formation. The polypeptide is UDP-N-acetylenolpyruvoylglucosamine reductase (Xylella fastidiosa (strain M23)).